The sequence spans 191 residues: Xanthine phosphoribosyltransferase (191 aa).

Residues Leu-20 and Asn-27 each coordinate xanthine. 128-132 (ANGQA) serves as a coordination point for 5-phospho-alpha-D-ribose 1-diphosphate. Lys-156 contacts xanthine.

This sequence belongs to the purine/pyrimidine phosphoribosyltransferase family. Xpt subfamily. Homodimer.

Its subcellular location is the cytoplasm. The enzyme catalyses XMP + diphosphate = xanthine + 5-phospho-alpha-D-ribose 1-diphosphate. The protein operates within purine metabolism; XMP biosynthesis via salvage pathway; XMP from xanthine: step 1/1. Converts the preformed base xanthine, a product of nucleic acid breakdown, to xanthosine 5'-monophosphate (XMP), so it can be reused for RNA or DNA synthesis. The chain is Xanthine phosphoribosyltransferase from Acinetobacter baylyi (strain ATCC 33305 / BD413 / ADP1).